Here is a 580-residue protein sequence, read N- to C-terminus: Xylulose kinase (580 aa).

Substrate is bound by residues His-99, Arg-170, Asp-280, and Asn-281. Residues Trp-355, 441 to 442, and Asn-445 contribute to the ATP site; that span reads GA.

It belongs to the FGGY kinase family. In terms of assembly, monomer.

The catalysed reaction is D-xylulose + ATP = D-xylulose 5-phosphate + ADP + H(+). Functionally, phosphorylates D-xylulose to produce D-xylulose 5-phosphate, a molecule that may play an important role in the regulation of glucose metabolism and lipogenesis. The sequence is that of Xylulose kinase (XYLB) from Pongo abelii (Sumatran orangutan).